A 155-amino-acid polypeptide reads, in one-letter code: Probable calcium-binding protein CML9 (155 aa).

EF-hand domains follow at residues 8-43 (EQVDECREIFDLFDSDEDGRIAAGELVTALRSLGQN), 86-121 (ATEKELAACLDVFDDARSGVIPAEQLRQAMVSHGDR), and 122-155 (LTEEEADEMVRKADPAGEGRVEYKEFVKVLMNNK). Residues Asp21, Asp23, Asp25, Arg27, and Glu32 each contribute to the Ca(2+) site.

Potential calcium sensor. The protein is Probable calcium-binding protein CML9 (CML9) of Oryza sativa subsp. japonica (Rice).